Here is a 128-residue protein sequence, read N- to C-terminus: uncharacterized protein (128 aa).

Residues 24–43 (KRTQNNTEQASRAINSPLQS) form a disordered region. A compositionally biased stretch (polar residues) spans 26–43 (TQNNTEQASRAINSPLQS).

This is an uncharacterized protein from Homo sapiens (Human).